The chain runs to 418 residues: MLHPRARTMLLLSLPAVAIGIASSLILIVVMKIASVLQNLLWQRLPGTLGIAQDSPLWIIGVLTLTGIAVGLVIRFSQGHAGPDPACEPLIGAPVPPSALPGLIVALILGLAGGVSLGPEHPIMTINIALAVAIGARLLPRVNRMEWTILASAGTIGALFGTPVAAALIFSQTLNGSSEVPLWDRLFAPLMAAAAGALTTGLFFHPHFSLPIAHYGQMEMTDILSGAIVAAIAIAAGMVAVWCLPRLHAMMNQMKNPVLVLGIGGFILGILGVIGGPVSLFKGLDEMQQMVANQAFSTSDYFLLAVIKLAALVVAAASGFRGGRIFPAVFVGVALGLMLHEHVPAVPAAITVSCAILGIVLVVTRDGWLSLFMAAVVVPNTTLLPLLCIVMLPAWLLLAGKPMMMVNRPKQQPPHDNV.

The next 12 membrane-spanning stretches (helical) occupy residues 10–30 (LLLS…LIVV), 54–74 (DSPL…GLVI), 99–119 (ALPG…SLGP), 120–140 (EHPI…RLLP), 149–169 (ILAS…AALI), 186–206 (LFAP…FFHP), 223–243 (ILSG…AVWC), 258–278 (VLVL…GGPV), 300–320 (DYFL…ASGF), 322–342 (GGRI…LHEH), 343–363 (VPAV…VLVV), and 371–391 (LFMA…CIVM).

It belongs to the chloride channel (TC 2.A.49) family.

It localises to the cell membrane. The chain is Putative ion-transport protein YfeO from Shigella boydii serotype 4 (strain Sb227).